The sequence spans 332 residues: uncharacterized protein (332 aa).

The chain crosses the membrane as a helical span at residues 185–205; the sequence is MVYGYSVFNAFFILLALPNVI.

Its subcellular location is the host membrane. This is an uncharacterized protein from Sulfolobus islandicus filamentous virus (isolate Iceland/Hveragerdi) (SIFV).